The sequence spans 1343 residues: DNA-directed RNA polymerase subunit beta (1343 aa).

It belongs to the RNA polymerase beta chain family. In terms of assembly, the RNAP catalytic core consists of 2 alpha, 1 beta, 1 beta' and 1 omega subunit. When a sigma factor is associated with the core the holoenzyme is formed, which can initiate transcription.

It carries out the reaction RNA(n) + a ribonucleoside 5'-triphosphate = RNA(n+1) + diphosphate. DNA-dependent RNA polymerase catalyzes the transcription of DNA into RNA using the four ribonucleoside triphosphates as substrates. The chain is DNA-directed RNA polymerase subunit beta from Buchnera aphidicola subsp. Cinara cedri (strain Cc).